A 227-amino-acid polypeptide reads, in one-letter code: Cytochrome c oxidase subunit 2 (227 aa).

Topologically, residues 1–14 are mitochondrial intermembrane; that stretch reads MAYPLQLGFQDAVS. A helical membrane pass occupies residues 15–45; sequence PIMEELLYFHDHTLMIVFLISSLVLYIITLM. Topologically, residues 46-59 are mitochondrial matrix; sequence LTTKLTHTNTMNAQ. The chain crosses the membrane as a helical span at residues 60–87; that stretch reads EVETVWTILPAIILILIALPSLRILYMM. At 88–227 the chain is on the mitochondrial intermembrane side; it reads DEINNPSLTV…TFEKWTASLL (140 aa). 6 residues coordinate Cu cation: His-161, Cys-196, Glu-198, Cys-200, His-204, and Met-207. Glu-198 contacts Mg(2+).

Belongs to the cytochrome c oxidase subunit 2 family. Component of the cytochrome c oxidase (complex IV, CIV), a multisubunit enzyme composed of 14 subunits. The complex is composed of a catalytic core of 3 subunits MT-CO1, MT-CO2 and MT-CO3, encoded in the mitochondrial DNA, and 11 supernumerary subunits COX4I, COX5A, COX5B, COX6A, COX6B, COX6C, COX7A, COX7B, COX7C, COX8 and NDUFA4, which are encoded in the nuclear genome. The complex exists as a monomer or a dimer and forms supercomplexes (SCs) in the inner mitochondrial membrane with NADH-ubiquinone oxidoreductase (complex I, CI) and ubiquinol-cytochrome c oxidoreductase (cytochrome b-c1 complex, complex III, CIII), resulting in different assemblies (supercomplex SCI(1)III(2)IV(1) and megacomplex MCI(2)III(2)IV(2)). Found in a complex with TMEM177, COA6, COX18, COX20, SCO1 and SCO2. Interacts with TMEM177 in a COX20-dependent manner. Interacts with COX20. Interacts with COX16. The cofactor is Cu cation.

It is found in the mitochondrion inner membrane. It catalyses the reaction 4 Fe(II)-[cytochrome c] + O2 + 8 H(+)(in) = 4 Fe(III)-[cytochrome c] + 2 H2O + 4 H(+)(out). Functionally, component of the cytochrome c oxidase, the last enzyme in the mitochondrial electron transport chain which drives oxidative phosphorylation. The respiratory chain contains 3 multisubunit complexes succinate dehydrogenase (complex II, CII), ubiquinol-cytochrome c oxidoreductase (cytochrome b-c1 complex, complex III, CIII) and cytochrome c oxidase (complex IV, CIV), that cooperate to transfer electrons derived from NADH and succinate to molecular oxygen, creating an electrochemical gradient over the inner membrane that drives transmembrane transport and the ATP synthase. Cytochrome c oxidase is the component of the respiratory chain that catalyzes the reduction of oxygen to water. Electrons originating from reduced cytochrome c in the intermembrane space (IMS) are transferred via the dinuclear copper A center (CU(A)) of subunit 2 and heme A of subunit 1 to the active site in subunit 1, a binuclear center (BNC) formed by heme A3 and copper B (CU(B)). The BNC reduces molecular oxygen to 2 water molecules using 4 electrons from cytochrome c in the IMS and 4 protons from the mitochondrial matrix. The polypeptide is Cytochrome c oxidase subunit 2 (MT-CO2) (Hippopotamus amphibius (Hippopotamus)).